A 96-amino-acid chain; its full sequence is Integration host factor subunit alpha (96 aa).

The protein belongs to the bacterial histone-like protein family. As to quaternary structure, heterodimer of an alpha and a beta chain.

In terms of biological role, this protein is one of the two subunits of integration host factor, a specific DNA-binding protein that functions in genetic recombination as well as in transcriptional and translational control. The chain is Integration host factor subunit alpha from Haemophilus influenzae (strain 86-028NP).